A 232-amino-acid chain; its full sequence is Acetate--CoA ligase [ADP-forming] I subunit beta (232 aa).

Residues 27-63 (KEILKLYGIPVPEFKVARNEEEAVKFSGEIGYPVVMK) form the ATP-grasp domain. ATP is bound at residue 53-64 (SGEIGYPVVMKI).

It belongs to the acetate CoA ligase beta subunit family. In terms of assembly, heterotetramer of two alpha and two beta subunits.

Its subcellular location is the cytoplasm. It catalyses the reaction acetate + ATP + CoA = acetyl-CoA + ADP + phosphate. With respect to regulation, activity is dependent on magnesium. Catalyzes the reversible formation of acetate and ATP from acetyl-CoA by using ADP and phosphate. Can use other substrates such as isobutyryl-CoA, propionyl-CoA and butyryl-CoA, but not indoleacetyl-CoA, phenylacetyl-CoA or succinyl-CoA. Seems to be involved primarily in the conversion of acetyl-CoA to acetate. Participates in the degradation of branched-chain amino acids via branched-chain-acyl-CoA esters. The chain is Acetate--CoA ligase [ADP-forming] I subunit beta from Pyrococcus furiosus (strain ATCC 43587 / DSM 3638 / JCM 8422 / Vc1).